The following is a 176-amino-acid chain: Phosphopantetheine adenylyltransferase (176 aa).

Threonine 11 provides a ligand contact to substrate. ATP is bound by residues 11 to 12 (TF) and histidine 19. Lysine 43, leucine 93, and arginine 107 together coordinate substrate. ATP contacts are provided by residues glutamate 117 and 141 to 147 (LSVVSSS).

This sequence belongs to the bacterial CoaD family. As to quaternary structure, homohexamer. It depends on Mg(2+) as a cofactor.

It localises to the cytoplasm. The enzyme catalyses (R)-4'-phosphopantetheine + ATP + H(+) = 3'-dephospho-CoA + diphosphate. It functions in the pathway cofactor biosynthesis; coenzyme A biosynthesis; CoA from (R)-pantothenate: step 4/5. Its function is as follows. Reversibly transfers an adenylyl group from ATP to 4'-phosphopantetheine, yielding dephospho-CoA (dPCoA) and pyrophosphate. This is Phosphopantetheine adenylyltransferase from Tropheryma whipplei (strain TW08/27) (Whipple's bacillus).